The primary structure comprises 248 residues: Ribonuclease PH (248 aa).

Phosphate is bound by residues Arg-93 and 131-133 (GTR).

This sequence belongs to the RNase PH family. In terms of assembly, homohexameric ring arranged as a trimer of dimers.

It catalyses the reaction tRNA(n+1) + phosphate = tRNA(n) + a ribonucleoside 5'-diphosphate. Its function is as follows. Phosphorolytic 3'-5' exoribonuclease that plays an important role in tRNA 3'-end maturation. Removes nucleotide residues following the 3'-CCA terminus of tRNAs; can also add nucleotides to the ends of RNA molecules by using nucleoside diphosphates as substrates, but this may not be physiologically important. Probably plays a role in initiation of 16S rRNA degradation (leading to ribosome degradation) during starvation. This Bifidobacterium longum (strain NCC 2705) protein is Ribonuclease PH.